The sequence spans 34 residues: Cytochrome b6-f complex subunit 8 (34 aa).

Residues 3–23 (LLTFGWAALLAVFTFSLAMVV) traverse the membrane as a helical segment.

Belongs to the PetN family. As to quaternary structure, the 4 large subunits of the cytochrome b6-f complex are cytochrome b6, subunit IV (17 kDa polypeptide, PetD), cytochrome f and the Rieske protein, while the 4 small subunits are PetG, PetL, PetM and PetN. The complex functions as a dimer.

It localises to the cellular thylakoid membrane. In terms of biological role, component of the cytochrome b6-f complex, which mediates electron transfer between photosystem II (PSII) and photosystem I (PSI), cyclic electron flow around PSI, and state transitions. The polypeptide is Cytochrome b6-f complex subunit 8 (Synechococcus elongatus (strain ATCC 33912 / PCC 7942 / FACHB-805) (Anacystis nidulans R2)).